Consider the following 207-residue polypeptide: Probable GTP-binding protein EngB (207 aa).

The 176-residue stretch at 24 to 199 (GGYEVAFAGR…RGIVGGWLGL (176 aa)) folds into the EngB-type G domain. GTP-binding positions include 32–39 (GRSNAGKS), 59–63 (GRTQQ), 77–80 (DLPG), 144–147 (TKAD), and 178–180 (YSG). Residues serine 39 and threonine 61 each coordinate Mg(2+).

Belongs to the TRAFAC class TrmE-Era-EngA-EngB-Septin-like GTPase superfamily. EngB GTPase family. Mg(2+) is required as a cofactor.

In terms of biological role, necessary for normal cell division and for the maintenance of normal septation. The chain is Probable GTP-binding protein EngB from Xanthomonas oryzae pv. oryzae (strain MAFF 311018).